The chain runs to 82 residues: Sulfur carrier protein TusA (82 aa).

C19 serves as the catalytic Cysteine persulfide intermediate.

This sequence belongs to the sulfur carrier protein TusA family.

Its subcellular location is the cytoplasm. In terms of biological role, sulfur carrier protein which probably makes part of a sulfur-relay system. In Photobacterium profundum (strain SS9), this protein is Sulfur carrier protein TusA.